The primary structure comprises 793 residues: E3 ubiquitin-protein ligase UHRF1 (793 aa).

The Ubiquitin-like domain occupies 1–78 (MWIQVRTMDG…IQLLVRQSLV (78 aa)). Phosphoserine occurs at positions 76, 91, 95, and 165. The tract at residues 82–124 (STKERDSELSDTDSGCCLGQSESDKSSTHGEAAAETDSRPADE) is disordered. Tudor-like regions lie at residues 133–209 (GLYK…ARAR) and 216–283 (DLEV…IERP). Lys-279 is covalently cross-linked (Glycyl lysine isopeptide (Lys-Gly) (interchain with G-Cter in SUMO2)). Ser-287 is modified (phosphoserine). Residues 296–301 (RKSGPS) form a linker region. Ser-298 is subject to Phosphoserine; by PKA. Residues 310–366 (NRLCRVCACHLCGGRQDPDKQLMCDECDMAFHIYCLDPPLSSVPSEDEWYCPECRND) form a PHD-type zinc finger. Histone H3R2me0 binding regions lie at residues 333–337 (CDECD) and 353–355 (PSE). At Ser-368 the chain carries Phosphoserine. Lys-385 participates in a covalent cross-link: Glycyl lysine isopeptide (Lys-Gly) (interchain with G-Cter in SUMO2). The residue at position 399 (Lys-399) is an N6-acetyllysine. Residues 419 to 582 (GPIPGIPVGT…FLVWRYLLRR (164 aa)) form the YDG domain. The tract at residues 445-446 (HV) is required to promote base flipping. Residues 463–464 (AG) and Asp-469 contribute to the DNA site. 2 required for formation of a 5-methylcytosine-binding pocket regions span residues 466–469 (YEDD) and 478–481 (YTGS). N6-acetyllysine; alternate is present on Lys-546. A Glycyl lysine isopeptide (Lys-Gly) (interchain with G-Cter in SUMO2); alternate cross-link involves residue Lys-546. Positions 618–629 (REREKENSKREE) are enriched in basic and acidic residues. The segment at 618 to 673 (REREKENSKREEEEQQEGGFASPRTGKGKWKRKSAGGGPSRAGSPRRTSKKTKVEP) is disordered. Ser-639 bears the Phosphoserine; by CDK1 mark. The residue at position 651 (Ser-651) is a Phosphoserine. A Glycyl lysine isopeptide (Lys-Gly) (interchain with G-Cter in SUMO2) cross-link involves residue Lys-670. 2 positions are modified to phosphoserine: Ser-707 and Ser-709. An RING-type zinc finger spans residues 724 to 763 (CICCQELVFRPITTVCQHNVCKDCLDRSFRAQVFSCPACR).

As to quaternary structure, interacts with DNMT3A and DNMT3B. Interacts with DNMT1; the interaction is direct. Interacts with USP7; leading to its deubiquitination. Interacts with histone H3. Interacts with HDAC1, but not with HDAC2. Interacts with BLTP3A. Interacts with PML. Interacts with EHMT2. Binds hemimethylated CpG containing oligonucleotides. Interacts with ZNF263; recruited to the SIX3 promoter along with other proteins involved in chromatin modification and transcriptional corepression where it contributes to transcriptional repression. Interacts with UHRF2. Interacts with FANCD2. Interacts with TET1 isoform 2; this interaction induces the recruitment of TET1 isoform 2 to replicating heterochromatin. Post-translationally, phosphorylation at Ser-298 of the linker region decreases the binding to H3K9me3. Phosphorylation at Ser-639 by CDK1 during M phase impairs interaction with USP7, preventing deubiquitination and leading to degradation by the proteasome. Ubiquitinated; which leads to proteasomal degradation. Autoubiquitinated; interaction with USP7 leads to deubiquitination and prevents degradation. Ubiquitination and degradation takes place during M phase, when phosphorylation at Ser-639 prevents interaction with USP7 and subsequent deubiquitination. Polyubiquitination may be stimulated by DNA damage. As to expression, expressed in thymus, bone marrow, testis, lung and heart. Overexpressed in breast cancer.

It is found in the nucleus. It catalyses the reaction S-ubiquitinyl-[E2 ubiquitin-conjugating enzyme]-L-cysteine + [acceptor protein]-L-lysine = [E2 ubiquitin-conjugating enzyme]-L-cysteine + N(6)-ubiquitinyl-[acceptor protein]-L-lysine.. It functions in the pathway protein modification; protein ubiquitination. In terms of biological role, multidomain protein that acts as a key epigenetic regulator by bridging DNA methylation and chromatin modification. Specifically recognizes and binds hemimethylated DNA at replication forks via its YDG domain and recruits DNMT1 methyltransferase to ensure faithful propagation of the DNA methylation patterns through DNA replication. In addition to its role in maintenance of DNA methylation, also plays a key role in chromatin modification: through its tudor-like regions and PHD-type zinc fingers, specifically recognizes and binds histone H3 trimethylated at 'Lys-9' (H3K9me3) and unmethylated at 'Arg-2' (H3R2me0), respectively, and recruits chromatin proteins. Enriched in pericentric heterochromatin where it recruits different chromatin modifiers required for this chromatin replication. Also localizes to euchromatic regions where it negatively regulates transcription possibly by impacting DNA methylation and histone modifications. Has E3 ubiquitin-protein ligase activity by mediating the ubiquitination of target proteins such as histone H3 and PML. It is still unclear how E3 ubiquitin-protein ligase activity is related to its role in chromatin in vivo. Plays a role in DNA repair by cooperating with UHRF2 to ensure recruitment of FANCD2 to interstrand cross-links (ICLs) leading to FANCD2 activation. Acts as a critical player of proper spindle architecture by catalyzing the 'Lys-63'-linked ubiquitination of KIF11, thereby controlling KIF11 localization on the spindle. The protein is E3 ubiquitin-protein ligase UHRF1 (UHRF1) of Homo sapiens (Human).